The following is a 460-amino-acid chain: Ammonium transporter Rh type B (460 aa).

The Cytoplasmic portion of the chain corresponds to 1 to 10 (MTGYSTNMRI). The chain crosses the membrane as a helical span at residues 11–31 (KLPVFCLLLEFITIILFAVFV). At 32–62 (RYDHESDAKQWHDEMRNHSVQNAENDFYFRY) the chain is on the extracellular side. N-linked (GlcNAc...) asparagine glycosylation is present at Asn48. A helical transmembrane segment spans residues 63 to 83 (PSFQDVHVMIFIGFGFLMTFL). Over 84–87 (KRYG) the chain is Cytoplasmic. Residues 88-108 (FSSVAFNFLIAAFGLQWSTLI) traverse the membrane as a helical segment. At 109–125 (QGFFHGFHDGKIHVGIE) the chain is on the extracellular side. The helical transmembrane segment at 126-146 (SMINADFCTGAVLISFGAVLG) threads the bilayer. The Cytoplasmic portion of the chain corresponds to 147 to 150 (KTSP). Residues 151 to 171 (VQLIVMTLIEVTLFGINEYII) form a helical membrane-spanning segment. At 172–179 (LNIVGAKD) the chain is on the extracellular side. A helical membrane pass occupies residues 180-202 (AGGSMTIHTFGAYFGLIVSRVLY). Topologically, residues 203-220 (RDDLEKSRQREGSVYHSD) are cytoplasmic. A helical transmembrane segment spans residues 221–241 (LFAMIGTIYLWMFWPSFNSAI). Residues 242-252 (TAHGDDQHRTV) lie on the Extracellular side of the membrane. A helical transmembrane segment spans residues 253-273 (MNTYYSLAACTLATFGFSALL). Over 274 to 283 (NGEGKLDMVH) the chain is Cytoplasmic. A helical transmembrane segment spans residues 284–304 (IQNAALAGGVAVGTSGEMMLT). Position 305 (Pro305) is a topological domain, extracellular. Residues 306–326 (FGAMIAGTLAGMISVLGYKYL) form a helical membrane-spanning segment. Over 327–347 (TPVLDSKLKIQDTCGVHNLHG) the chain is Cytoplasmic. Residues 348 to 368 (MPGILGALIGAIVALFATAEI) traverse the membrane as a helical segment. At 369–394 (YGAGMEDVFPLISDGSRTAKQQSLYQ) the chain is on the extracellular side. Residues 395–415 (FLALLVALGFAILGGLVVGFI) traverse the membrane as a helical segment. The Cytoplasmic portion of the chain corresponds to 416–460 (LKLPIFGTPSDAECFEDAVYWEVPGGEGHQQLTVVINNEDPDTQA).

It belongs to the ammonium transporter (TC 2.A.49) family. Rh subfamily.

It localises to the basolateral cell membrane. The protein resides in the cytoplasmic vesicle membrane. Functions as a specific ammonium transporter. The protein is Ammonium transporter Rh type B (rhbg) of Xenopus tropicalis (Western clawed frog).